Consider the following 386-residue polypeptide: Succinate--CoA ligase [ADP-forming] subunit beta (386 aa).

The ATP-grasp domain maps to 9–244; that stretch reads KQILKKYGAV…LNEEDPTEID (236 aa). ATP-binding positions include K46, 53–55, E99, S102, and E107; that span reads GRG. Mg(2+)-binding residues include N199 and D213. Residues N264 and 321–323 each bind substrate; that span reads GIM.

It belongs to the succinate/malate CoA ligase beta subunit family. In terms of assembly, heterotetramer of two alpha and two beta subunits. Requires Mg(2+) as cofactor.

It carries out the reaction succinate + ATP + CoA = succinyl-CoA + ADP + phosphate. The enzyme catalyses GTP + succinate + CoA = succinyl-CoA + GDP + phosphate. Its pathway is carbohydrate metabolism; tricarboxylic acid cycle; succinate from succinyl-CoA (ligase route): step 1/1. Functionally, succinyl-CoA synthetase functions in the citric acid cycle (TCA), coupling the hydrolysis of succinyl-CoA to the synthesis of either ATP or GTP and thus represents the only step of substrate-level phosphorylation in the TCA. The beta subunit provides nucleotide specificity of the enzyme and binds the substrate succinate, while the binding sites for coenzyme A and phosphate are found in the alpha subunit. The sequence is that of Succinate--CoA ligase [ADP-forming] subunit beta from Pelagibacter ubique (strain HTCC1062).